The primary structure comprises 348 residues: Aspartate carbamoyltransferase catalytic subunit (348 aa).

Positions 57 and 58 each coordinate carbamoyl phosphate. L-aspartate is bound at residue Lys86. Residues Arg107, His135, and Gln138 each contribute to the carbamoyl phosphate site. Positions 172 and 234 each coordinate L-aspartate. Carbamoyl phosphate-binding residues include Leu274 and Pro275.

This sequence belongs to the aspartate/ornithine carbamoyltransferase superfamily. ATCase family. In terms of assembly, heterododecamer (2C3:3R2) of six catalytic PyrB chains organized as two trimers (C3), and six regulatory PyrI chains organized as three dimers (R2).

It carries out the reaction carbamoyl phosphate + L-aspartate = N-carbamoyl-L-aspartate + phosphate + H(+). It participates in pyrimidine metabolism; UMP biosynthesis via de novo pathway; (S)-dihydroorotate from bicarbonate: step 2/3. Its function is as follows. Catalyzes the condensation of carbamoyl phosphate and aspartate to form carbamoyl aspartate and inorganic phosphate, the committed step in the de novo pyrimidine nucleotide biosynthesis pathway. The sequence is that of Aspartate carbamoyltransferase catalytic subunit from Dichelobacter nodosus (strain VCS1703A).